We begin with the raw amino-acid sequence, 504 residues long: Glutamate--tRNA ligase (504 aa).

The short motif at P27–L37 is the 'HIGH' region element. The short motif at K271–R275 is the 'KMSKS' region element. An ATP-binding site is contributed by K274.

The protein belongs to the class-I aminoacyl-tRNA synthetase family. Glutamate--tRNA ligase type 1 subfamily. In terms of assembly, monomer.

The protein localises to the cytoplasm. It catalyses the reaction tRNA(Glu) + L-glutamate + ATP = L-glutamyl-tRNA(Glu) + AMP + diphosphate. In terms of biological role, catalyzes the attachment of glutamate to tRNA(Glu) in a two-step reaction: glutamate is first activated by ATP to form Glu-AMP and then transferred to the acceptor end of tRNA(Glu). This Arthrobacter sp. (strain FB24) protein is Glutamate--tRNA ligase.